We begin with the raw amino-acid sequence, 155 residues long: Small ribosomal subunit protein uS7cz/uS7cy (155 aa).

The protein belongs to the universal ribosomal protein uS7 family. Part of the 30S ribosomal subunit.

Its subcellular location is the plastid. The protein localises to the chloroplast. Functionally, one of the primary rRNA binding proteins, it binds directly to 16S rRNA where it nucleates assembly of the head domain of the 30S subunit. The chain is Small ribosomal subunit protein uS7cz/uS7cy (rps7-A) from Coffea arabica (Arabian coffee).